Here is a 524-residue protein sequence, read N- to C-terminus: Glutamyl-tRNA(Gln) amidotransferase subunit A, mitochondrial (524 aa).

K76 (charge relay system) is an active-site residue. The segment at K146–A168 is disordered. Catalysis depends on S171, which acts as the Charge relay system. S195 serves as the catalytic Acyl-ester intermediate.

Belongs to the amidase family. GatA subfamily. Subunit of the heterotrimeric GatCAB amidotransferase (AdT) complex, composed of A (QRSL1), B (GATB) and C (GATC) subunits.

The protein resides in the mitochondrion. The catalysed reaction is L-glutamyl-tRNA(Gln) + L-glutamine + ATP + H2O = L-glutaminyl-tRNA(Gln) + L-glutamate + ADP + phosphate + H(+). Allows the formation of correctly charged Gln-tRNA(Gln) through the transamidation of misacylated Glu-tRNA(Gln) in the mitochondria. The reaction takes place in the presence of glutamine and ATP through an activated gamma-phospho-Glu-tRNA(Gln). This chain is Glutamyl-tRNA(Gln) amidotransferase subunit A, mitochondrial, found in Ornithorhynchus anatinus (Duckbill platypus).